The primary structure comprises 21 residues: Hemocyanin subunit 6 (21 aa).

Belongs to the tyrosinase family. Hemocyanin subfamily. Hemolymph.

Its subcellular location is the secreted. It localises to the extracellular space. Its function is as follows. Hemocyanins are copper-containing oxygen carriers occurring freely dissolved in the hemolymph of many mollusks and arthropods. This is Hemocyanin subunit 6 from Maja squinado (Mediterranean spider crab).